A 217-amino-acid chain; its full sequence is Ras-related protein RABA1g (217 aa).

Position 20–27 (20–27) interacts with GTP; that stretch reads GDSGVGKS. An Effector region motif is present at residues 42–50; the sequence is SKSTIGVEF. Residues 68-72, 126-129, and 156-157 contribute to the GTP site; these read DTAGQ, NKAD, and SA. S-geranylgeranyl cysteine attachment occurs at residues C214 and C215.

The protein belongs to the small GTPase superfamily. Rab family.

It localises to the cell membrane. Its function is as follows. Intracellular vesicle trafficking and protein transport. The protein is Ras-related protein RABA1g (RABA1G) of Arabidopsis thaliana (Mouse-ear cress).